A 922-amino-acid chain; its full sequence is Coronin-7 (922 aa).

WD repeat units follow at residues 75–115 (CHSD…EALP), 124–163 (PEEL…HLTE), 166–205 (AHKD…QASQ), and 209–253 (AHEN…SALA). Residues 386–462 (NPAHRPHPRF…TSPSQRSLQS (77 aa)) form a disordered region. Low complexity predominate over residues 423-456 (SEGFSSPSSLVSPSTPSSLGLSLSSTSGIGTSPS). 2 positions are modified to phosphoserine: S459 and S462. Residue K469 forms a Glycyl lysine isopeptide (Lys-Gly) (interchain with G-Cter in ubiquitin) linkage. WD repeat units follow at residues 539-579 (QNGA…LKNV), 589-629 (GHTE…EQLR), 632-671 (GHQD…LPLQ), and 725-765 (DVAP…PFFL). The disordered stretch occupies residues 854 to 922 (LQPPGMTPVS…FEGVDEDEWD (69 aa)). T874 is modified (phosphothreonine). The segment covering 881–893 (LEEKSDQQKKEEL) has biased composition (basic and acidic residues). S912 bears the Phosphoserine mark.

This sequence belongs to the WD repeat coronin family. Interacts with clathrin adapter AP1 complex. This interaction takes place at Golgi membranes and not AP1-positive endosomal membranes. Interacts (when ubiquitinated at Lys-469) with EPS15. In terms of processing, the membrane-associated form is phosphorylated on tyrosine residues. Post-translationally, ubiquitinated via 'Lys-33'-linked ubiquitin chains by the BCR(KLHL20) E3 ubiquitin ligase complex: 'Lys-33'-linked ubiquitination promotes interaction with EPS15 and facilitates actin polymerization at the trans-Golgi network, thereby facilitating post-Golgi trafficking. Deubiquitinated by ZRANB1/TRABID.

Its subcellular location is the golgi apparatus membrane. The protein localises to the golgi apparatus. It localises to the trans-Golgi network. The protein resides in the cytoplasmic vesicle. It is found in the cytoplasm. Its subcellular location is the cytosol. Functionally, F-actin regulator involved in anterograde Golgi to endosome transport: upon ubiquitination via 'Lys-33'-linked ubiquitin chains by the BCR(KLHL20) E3 ubiquitin ligase complex, interacts with EPS15 and localizes to the trans-Golgi network, where it promotes actin polymerization, thereby facilitating post-Golgi trafficking. May play a role in the maintenance of the Golgi apparatus morphology. The protein is Coronin-7 (Coro7) of Rattus norvegicus (Rat).